Reading from the N-terminus, the 369-residue chain is 3-dehydroquinate synthase (369 aa).

Residues 75-80 (DGEEHK), 109-113 (GVIGD), 133-134 (TT), lysine 146, lysine 155, and 173-176 (TLKT) each bind NAD(+). Residues glutamate 188, histidine 251, and histidine 268 each contribute to the Zn(2+) site.

It belongs to the sugar phosphate cyclases superfamily. Dehydroquinate synthase family. Co(2+) is required as a cofactor. The cofactor is Zn(2+). NAD(+) serves as cofactor.

Its subcellular location is the cytoplasm. It carries out the reaction 7-phospho-2-dehydro-3-deoxy-D-arabino-heptonate = 3-dehydroquinate + phosphate. The protein operates within metabolic intermediate biosynthesis; chorismate biosynthesis; chorismate from D-erythrose 4-phosphate and phosphoenolpyruvate: step 2/7. In terms of biological role, catalyzes the conversion of 3-deoxy-D-arabino-heptulosonate 7-phosphate (DAHP) to dehydroquinate (DHQ). The protein is 3-dehydroquinate synthase of Legionella pneumophila (strain Corby).